The primary structure comprises 18141 residues: Titin (18141 aa).

Residues 1 to 31 show a composition bias toward low complexity; the sequence is MQRQNPNPYQQQNQQHQQVQQFSSQEYSHSS. Positions 1–69 are disordered; the sequence is MQRQNPNPYQ…QHHGGSIGGA (69 aa). The segment covering 32–47 has biased composition (basic and acidic residues); it reads QEQHQEQRISRTEQHV. A compositionally biased stretch (low complexity) spans 48–62; it reads QRSQVTTQRQVQQHH. Ig-like domains lie at 86-177, 255-343, 372-461, 471-559, 618-708, 751-842, 890-981, 1024-1115, 1158-1249, 1291-1381, 1424-1515, 1558-1643, 1691-1781, 1824-1917, 1958-2050, 2089-2180, and 2222-2313; these read PPVF…VYIQ, PQIS…AVLA, PAFV…AQLN, PQFV…ARLY, PQFI…AILS, PQFI…SSIR, PQFK…AQLT, PRFL…ATMI, PVFV…ACVR, PQFT…CSVR, PRFL…VELQ, PVFT…EAIT, PVFT…ASLI, PVFV…LNVT, PQFG…VNVT, PIFL…CNVR, and PHFT…TNLR. Positions 236–266 are disordered; sequence EQDSQLSQELDRNQGPAQAPQISQKPRSSKL. An intrachain disulfide couples C393 to C445. 3 cysteine pairs are disulfide-bonded: C1312/C1365, C1446/C1499, and C1579/C1632. A disulfide bridge links C1846 with C1899. C2111 and C2164 form a disulfide bridge. The segment covering 2338-2347 has biased composition (basic and acidic residues); sequence STAPHQRQEP. Positions 2338 to 2357 are disordered; sequence STAPHQRQEPETPGTRQRPV. Ig-like domains are found at residues 2356 to 2449, 2488 to 2581, and 2622 to 2715; these read PVFT…MRVV, PIFT…MKVK, and PVFT…LKIE. The segment at 2731–2750 is disordered; it reads PRIGELEAPKEGRPEAPEPT. Residues 2734 to 2746 are compositionally biased toward basic and acidic residues; sequence GELEAPKEGRPEA. Ig-like domains lie at 2754–2844, 2891–2983, 3029–3116, 3130–3221, 3263–3354, 3401–3494, 3539–3625, 3676–3767, and 3811–3901; these read PVFI…GTLK, PPVW…TTIF, PRFT…AEIS, PRFT…TTLN, PKFI…ASLK, PVFT…MKIQ, PEFI…ATVS, PKFT…AKVT, and PKFT…ATVS. C2775 and C2828 are oxidised to a cystine. C3152 and C3205 form a disulfide bridge. 3 disulfide bridges follow: C3560–C3613, C3698–C3751, and C3832–C3885. A TPR 1 repeat occupies 3910 to 3944; the sequence is LQNQVPRGMKRSDALTQMEATIKKYTSEVHLTEDD. Ig-like domains follow at residues 3954-4047 and 4092-4181; these read PRFV…IKVS and PVFV…LKVV. Residues C3976 and C4029 are joined by a disulfide bond. Residues 4204-4229 adopt a coiled-coil conformation; it reads AAYQKERQENELEKVFDERKQVLSEQ. Disordered regions lie at residues 4226-4254 and 4299-4336; these read LSEQSSHTLKGVEHLKPKQYKPPTPDWQQ and SSQAKGMAQSYEENLQEKTSTTEVQAAPPKGIAQPSES. The segment covering 4309 to 4322 has biased composition (polar residues); the sequence is YEENLQEKTSTTEV. Ig-like domains follow at residues 4394 to 4482, 4497 to 4585, 4604 to 4692, and 4703 to 4791; these read PVFT…ANLV, PSFV…GDCI, PHIV…AQLK, and PTIT…AKLT. The stretch at 4403–4438 is one TPR 2 repeat; it reads CRVFENEQAKFEVEFEGEPNPTVKWYRESFPIQNSP. C4625 and C4676 are joined by a disulfide. 8 disordered regions span residues 4803–4891, 5318–5368, 5413–5648, 5667–5701, 5718–5748, 5775–5982, 6034–6350, and 6364–6393; these read RTID…DKGV, DELV…QPEP, RVIP…EVDA, IKKTKRPKSTKEVTEELFEEQPEEEISPEEEVPQK, KKTKKPKLTQQVTEEETPHEEIIKESEEVVQ, KEEE…QRLL, KRVK…MPVD, and EEEVVPTEETPEAKQKAHKKRTKRLKEASV. Residues 4822-4841 are compositionally biased toward low complexity; sequence PESPHAFQPGQQPGQQFGQF. Basic residues predominate over residues 4852 to 4863; that stretch reads GRSRQKKPKVRS. Composition is skewed to basic and acidic residues over residues 5344-5357, 5436-5447, 5541-5552, 5591-5621, and 5633-5645; these read QPQEKTFEEAHDEL, RPKEAVKAEEIQ, QKPDEQKQELPK, IEEKLDVAPTKTYEKAVDVLPDEPKVEEKPE, and PKSEPTEEVHPDE. A TPR 3 repeat occupies 5575–5613; sequence PVLWERKKKKPQPQDVIEEKLDVAPTKTYEKAVDVLPDE. A compositionally biased stretch (acidic residues) spans 5681–5697; sequence EELFEEQPEEEISPEEE. Acidic residues-rich tracts occupy residues 5779–5792 and 5818–5860; these read IPTEETVEEEETAE and DVEE…QDEI. The span at 5865–5874 shows a compositional bias: basic residues; sequence RKVKKAKKPK. A compositionally biased stretch (acidic residues) spans 5883–5904; the sequence is EIEEDQPEEEVLQEEIIGEQEE. Positions 5910–5920 are enriched in basic residues; the sequence is RKVKSIKKPKK. Residues 5921–5971 are compositionally biased toward basic and acidic residues; sequence VVTEKTVDQTEQPEKPEESQAEEVKETVTEEPKKPKPAPEEAKVEQVEKIS. The segment covering 6034-6043 has biased composition (basic residues); the sequence is KRVKKKKPKT. A compositionally biased stretch (acidic residues) spans 6049 to 6079; it reads ESTEEPAEETEEFEEEATQPEEVQPVEEIPE. Composition is skewed to basic and acidic residues over residues 6081 to 6092, 6099 to 6133, 6141 to 6169, 6195 to 6209, 6217 to 6234, and 6259 to 6268; these read PQVKEVADERKT, RKEEIIEKVEEVALKRVTRPKKELPQEATIEEVRL, IKPEEVKLEEVDLQHVEKKEDEIVQEEKR, EAEHIELEKQPKPEE, KRGEKKQPVEEVLEEKKW, and PIEEQQKPEK. Residues 6281–6290 show a composition bias toward acidic residues; that stretch reads PESEEEELEL. A compositionally biased stretch (basic and acidic residues) spans 6291–6306; sequence EPLKLPEDKKPKEPKA. Positions 6307-6318 are enriched in basic residues; that stretch reads KKEKKKKPKLKK. 2 stretches are compositionally biased toward acidic residues: residues 6325–6349 and 6364–6373; these read EVSEEVAEPFDEPIAEEDEVEEMPV and EEEVVPTEET. Ig-like domains lie at 6536–6624, 6633–6728, 6741–6830, 6841–6929, 6942–7034, 7066–7151, and 7189–7279; these read PRIT…TNII, PQFT…NILS, PTVT…VVVS, PRFI…ATVN, PRFV…VKIQ, PKII…VAVT, and PSLL…FDIS. C6557 and C6608 are oxidised to a cystine. A disulfide bridge links C6964 with C7016. Residues 7621-7663 are a coiled coil; it reads KIQVQTKQIAQMNTKIKKHKKHKQQEQEVSETTIQCEQKETLA. Disordered regions lie at residues 7773–7793, 9414–9440, 9485–9510, 9556–9582, 9627–9652, 9698–9724, 9769–9796, 9838–9865, 9911–9937, 9982–10008, 10053–10080, 10125–10149, 10195–10220, 10266–10291, 10337–10364, 10408–10433, 10479–10504, 10550–10576, 10621–10648, 10692–10717, 10763–10788, 10834–10860, 10905–10932, 11047–11073, 11118–11143, 11189–11216, 11260–11286, 11679–11703, and 11767–11795; these read AKTAESSKELPSKIPKSVKAQ, EEDDKQPETTVTVEEVPYEEEKPEEIQ, EEDDKQPETTVTVEEVPYEEEKPEEI, EEDDKQPETTVTVEEVPYEEEKPEEIQE, TAEEDDKQPETTVTVEEVPYEEEKPEEI, ENDKQPETTVTVEEVPYEEEKPEEI, EEDDKQPKTTVTVEEVPYEEEKPEEI, EELDENKKPKKKTTKTRTFKKRGPD, and TEPEEASADALQKPTKDKTPKQKKTLETP. Residues 7774–7783 show a composition bias toward basic and acidic residues; sequence KTAESSKELP. Acidic residues-rich tracts occupy residues 9429-9440, 9500-9510, 9571-9582, 9642-9652, 9713-9724, 9784-9796, 9855-9865, 9926-9937, 9997-10008, 10068-10080, 10139-10149, 10210-10220, 10281-10291, 10352-10364, 10423-10433, 10494-10504, 10565-10576, 10636-10648, 10707-10717, 10778-10788, 10849-10860, 10920-10932, 11062-11073, 11133-11143, 11204-11216, and 11275-11286; these read VPYEEEKPEEIQ, VPYEEEKPEEI, and VPYEEEKPEEIQE. Residues 11686–11699 show a composition bias toward basic residues; the sequence is KPKKKTTKTRTFKK. Residues 11780–11792 show a composition bias toward basic and acidic residues; that stretch reads PTKDKTPKQKKTL. Residues 11872–11905 form a TPR 4 repeat; the sequence is KTVLQPYQRTEMELPQRARRDSSFKQPVKLTPMK. 18 disordered regions span residues 12003-12201, 12451-12471, 12685-12767, 12943-12971, 13131-13154, 13325-13349, 13471-13492, 13554-13576, 13702-13792, 13891-13914, 13951-13994, 14073-14094, 14109-14322, 14354-14377, 14414-14448, 14533-14566, 14583-14720, and 14756-14789; these read FKHS…ADTK, TLQVGVTEHEPTKKLKTKKPE, TVDD…LPGP, IDHENAEEAPKVLKSKVSEEKPKSKKEKS, IKKKKVSPKHGPKEQVFEITETRP, QSFESPEPTEGEAHETKTKTKKPKK, EEYEPTEMDSKKKPKKKVKSHN, EADKPIKQPTQDQPIKKEKPLKK, KVQK…KSPD, EEVQEKSKEAPEEKKAKTVRKAKK, MKRK…DEPK, TTVPTETPDQDQPSVKQKRTKK, EEEA…QVTT, EYEPEPVNQDEKPKEPKKKTRKVK, PLDSPIDVLDESPKEVQKKDKKSRSTKVPNEETPV, EPEIASPQSIEEHPEQSKEKLAPKPKKTVRKVKK, KVDL…SELP, and VEESQPIVEEVEDEEPQPATEETVEDVTKPKSKK. Composition is skewed to basic and acidic residues over residues 12022–12035, 12044–12054, 12124–12134, 12183–12201, 12457–12471, and 12685–12709; these read ESDHSDKSNKELLH, EKIETPDESRK, MERTSDIREES, LNLRKRQGERPDDDKADTK, TEHEPTKKLKTKKPE, and TVDDVRVPKDKKKKIDNQKKIKISE. Over residues 12731-12741 the composition is skewed to acidic residues; it reads HDEDLQTDEYS. Residues 12750-12760 are compositionally biased toward basic residues; it reads KSKKKSTKKQK. Over residues 13141-13154 the composition is skewed to basic and acidic residues; that stretch reads GPKEQVFEITETRP. The segment covering 13482–13492 has biased composition (basic residues); it reads KKPKKKVKSHN. The stretch at 13566 to 13599 is one TPR 5 repeat; the sequence is QPIKKEKPLKKKKDVEYPVSLEAFDHTVKVVSEP. The span at 13733–13747 shows a compositional bias: basic and acidic residues; it reads LVKEDLDQPIERALE. The span at 13771–13781 shows a compositional bias: basic residues; the sequence is PKPKKISKPKS. Composition is skewed to basic and acidic residues over residues 13893–13906 and 13975–13984; these read VQEKSKEAPEEKKA and EDKPVEKISE. A compositionally biased stretch (basic and acidic residues) spans 14221–14240; it reads TVEKPLEALHTDSDLEKPDV. Low complexity predominate over residues 14264-14274; sequence KISSEQPKQPS. Residues 14282–14294 are compositionally biased toward basic and acidic residues; the sequence is VTEHDLKPEEEKP. Basic and acidic residues predominate over residues 14542–14554; sequence IEEHPEQSKEKLA. A compositionally biased stretch (basic residues) spans 14555–14564; the sequence is PKPKKTVRKV. Over residues 14583-14599 the composition is skewed to basic and acidic residues; sequence KVDLEKYEKVEMPEKPV. A compositionally biased stretch (low complexity) spans 14652 to 14662; it reads ETTVDTTDIPE. Residues 14664–14683 are compositionally biased toward polar residues; that stretch reads TPTQTAQPEDTATAQITPSA. The span at 14684–14697 shows a compositional bias: basic and acidic residues; that stretch reads QEEKSTQDDTKDTI. Residues 14756-14771 are compositionally biased toward acidic residues; sequence VEESQPIVEEVEDEEP. The TPR 6 repeat unit spans residues 14904–14936; sequence IPKTTDIGAIKDNGELSRNIEEAEEILKFKPHK. 8 disordered regions span residues 14956–15208, 15301–15329, 15425–15448, 15578–15597, 15697–15722, 15825–15876, 15951–15973, and 16181–16206; these read EKYI…VSVK, TRKKKPKPQQPEEFEVTLKEPKEEQIQPD, ISETQSIEEKPIEVAEEAPEETPK, IRVSESEPKPEEPSVEQFTV, EKPAEAIVEEEEPVVTEPIEEAPKPE, EEPK…VEEP, ESQPEAVEDKEVSLPKKKPKAPI, and QEEEYEEGEDIEEFVVSQQRKPKPLQ. Composition is skewed to basic and acidic residues over residues 14967–14989, 15024–15046, 15069–15080, 15088–15097, 15109–15139, 15169–15179, 15189–15198, 15316–15325, 15425–15437, and 15578–15589; these read EKTPYKKPEKAPKPEEKQEDVKL, ELKQKPKEVEIVEEQTKKPKDGE, QIEHPEIPEKVK, KPKDKSKSEP, PKEEEAIPEQDVKFRKPERDAPEETDSEIKL, IEDKAIDDEKK, QPKEQEIAKE, VTLKEPKEEQ, ISETQSIEEKPIE, and IRVSESEPKPEE. Residues 15703–15716 show a composition bias toward acidic residues; that stretch reads IVEEEEPVVTEPIE. A compositionally biased stretch (basic and acidic residues) spans 15951-15964; the sequence is ESQPEAVEDKEVSL. Over residues 16183 to 16193 the composition is skewed to acidic residues; sequence EEYEEGEDIEE. One can recognise an SH3 domain in the interval 16409–16470; that stretch reads ENLNIMYSIC…PAQYLMEPEE (62 aa). 9 Ig-like domains span residues 16501–16590, 16625–16719, 16728–16811, 16822–16916, 16919–17001, 17007–17091, 17097–17180, 17184–17270, and 17277–17363; these read PRFI…TELI, PTFS…ITLK, PQIL…ANLT, PPLF…VEVD, TFTK…STVE, PDFI…CELV, PEIV…AKLT, PLVD…TKLC, and PPVI…AEAS. C16940 and C16989 form a disulfide bridge. The Fibronectin type-III 1 domain occupies 17374–17467; that stretch reads APGTPQPLEI…LSPPIRLVPK (94 aa). 2 consecutive Ig-like domains span residues 17473-17558 and 17563-17653; these read PSVQ…CRLK and PVLE…CTVQ. Cysteines 17494 and 17542 form a disulfide. 4 consecutive Fibronectin type-III domains span residues 17660–17755, 17760–17861, 17862–17958, and 17982–18078; these read RPQS…TKKF, PPRG…TPPS, PPQN…THAS, and PPTG…AMTA. The TPR 7 repeat unit spans residues 17694 to 17728; that stretch reads LEKCDVQNNVWMKVSDFNKDIKSYAVQKLSMNAQY. The disordered stretch occupies residues 17741 to 17771; that stretch reads SEPTESDPVTITKKFEKPSPPRGPTTVSGMN.

This sequence belongs to the protein kinase superfamily. CAMK Ser/Thr protein kinase family. In terms of assembly, interacts with Msp300; this interaction mediates the recruitment of Msp300 to the Z-disks. As to expression, expressed in the mesoderm at stage 11, several hours before myoblast fusion, and persists in most muscle cells, somatic, visceral and pharyngeal muscles and their precursors, until the third instar. Isoform A: Expressed in the indirect flight muscle (at protein level).

The protein localises to the cytoplasm. Its subcellular location is the nucleus. It localises to the chromosome. It is found in the myofibril. The protein resides in the sarcomere. The protein localises to the z line. In terms of biological role, key component in the assembly and functioning of adult and embryonic striated muscles and muscle tendons. By providing connections at the level of individual microfilaments, it contributes to the fine balance of forces between the two halves of the sarcomere. The size and extensibility of the cross-links are the main determinants of sarcomere extensibility properties of muscle. In non-muscle cells, seems to play a role in chromosome condensation and chromosome segregation during mitosis. Might link the lamina network to chromatin or nuclear actin, or both during interphase. This Drosophila melanogaster (Fruit fly) protein is Titin (sls).